The following is a 248-amino-acid chain: 14-3-3 protein homolog 2 (248 aa).

This sequence belongs to the 14-3-3 family.

The chain is 14-3-3 protein homolog 2 from Echinococcus multilocularis (Fox tapeworm).